The primary structure comprises 164 residues: CDP-archaeol synthase (164 aa).

A run of 4 helical transmembrane segments spans residues 3–23 (LFVF…AVLA), 53–73 (GLAI…LLHP), 77–97 (LLDA…GAFI), and 126–146 (SLYA…TPII).

This sequence belongs to the CDP-archaeol synthase family. It depends on Mg(2+) as a cofactor.

The protein resides in the cell membrane. The catalysed reaction is 2,3-bis-O-(geranylgeranyl)-sn-glycerol 1-phosphate + CTP + H(+) = CDP-2,3-bis-O-(geranylgeranyl)-sn-glycerol + diphosphate. Its pathway is membrane lipid metabolism; glycerophospholipid metabolism. In terms of biological role, catalyzes the formation of CDP-2,3-bis-(O-geranylgeranyl)-sn-glycerol (CDP-archaeol) from 2,3-bis-(O-geranylgeranyl)-sn-glycerol 1-phosphate (DGGGP) and CTP. This reaction is the third ether-bond-formation step in the biosynthesis of archaeal membrane lipids. In Pyrobaculum arsenaticum (strain DSM 13514 / JCM 11321 / PZ6), this protein is CDP-archaeol synthase.